A 187-amino-acid chain; its full sequence is Ribosome-recycling factor (187 aa).

This sequence belongs to the RRF family.

The protein resides in the cytoplasm. In terms of biological role, responsible for the release of ribosomes from messenger RNA at the termination of protein biosynthesis. May increase the efficiency of translation by recycling ribosomes from one round of translation to another. This Rhodopseudomonas palustris (strain BisB5) protein is Ribosome-recycling factor.